Consider the following 348-residue polypeptide: Erythronate-4-phosphate dehydrogenase (348 aa).

The substrate site is built by T46 and T67. D147 serves as a coordination point for NAD(+). R209 is a catalytic residue. D233 lines the NAD(+) pocket. E238 is a catalytic residue. The active-site Proton donor is the H255. G258 provides a ligand contact to NAD(+). Residue Y259 coordinates substrate.

Belongs to the D-isomer specific 2-hydroxyacid dehydrogenase family. PdxB subfamily. In terms of assembly, homodimer.

The protein localises to the cytoplasm. It catalyses the reaction 4-phospho-D-erythronate + NAD(+) = (R)-3-hydroxy-2-oxo-4-phosphooxybutanoate + NADH + H(+). The protein operates within cofactor biosynthesis; pyridoxine 5'-phosphate biosynthesis; pyridoxine 5'-phosphate from D-erythrose 4-phosphate: step 2/5. Functionally, catalyzes the oxidation of erythronate-4-phosphate to 3-hydroxy-2-oxo-4-phosphonooxybutanoate. The protein is Erythronate-4-phosphate dehydrogenase of Bacteroides fragilis (strain YCH46).